The chain runs to 451 residues: tRNA modification GTPase MnmE (451 aa).

(6S)-5-formyl-5,6,7,8-tetrahydrofolate is bound by residues arginine 37, glutamate 95, and lysine 135. Positions glycine 232 to glycine 376 constitute a TrmE-type G domain. A K(+)-binding site is contributed by asparagine 242. GTP is bound by residues asparagine 242 to threonine 247, serine 261 to threonine 267, and aspartate 286 to glycine 289. Serine 246 contributes to the Mg(2+) binding site. K(+)-binding residues include serine 261, isoleucine 263, and threonine 266. Threonine 267 contributes to the Mg(2+) binding site. Lysine 451 is a (6S)-5-formyl-5,6,7,8-tetrahydrofolate binding site.

This sequence belongs to the TRAFAC class TrmE-Era-EngA-EngB-Septin-like GTPase superfamily. TrmE GTPase family. In terms of assembly, homodimer. Heterotetramer of two MnmE and two MnmG subunits. The cofactor is K(+).

Its subcellular location is the cytoplasm. Its function is as follows. Exhibits a very high intrinsic GTPase hydrolysis rate. Involved in the addition of a carboxymethylaminomethyl (cmnm) group at the wobble position (U34) of certain tRNAs, forming tRNA-cmnm(5)s(2)U34. This is tRNA modification GTPase MnmE from Beijerinckia indica subsp. indica (strain ATCC 9039 / DSM 1715 / NCIMB 8712).